The primary structure comprises 463 residues: Matrix remodeling-associated protein 8 (463 aa).

The N-terminal stretch at methionine 1 to alanine 19 is a signal peptide. Residues valine 20–glutamine 362 are Extracellular-facing. 2 Ig-like V-type domains span residues proline 29–threonine 173 and proline 176–threonine 308. Intrachain disulfides connect cysteine 54-cysteine 153 and cysteine 202-cysteine 288. The N-linked (GlcNAc...) asparagine glycan is linked to asparagine 135. The residue at position 244 (serine 244) is a Phosphoserine. Residues arginine 268–aspartate 270 carry the RGD motif. The segment at glutamate 309–leucine 341 is disordered. Positions serine 321 to glycine 335 are enriched in low complexity. N-linked (GlcNAc...) asparagine glycosylation occurs at asparagine 324. A helical membrane pass occupies residues leucine 363–alanine 383. The Cytoplasmic segment spans residues threonine 384–lysine 463.

In terms of assembly, homodimer in cis. Does not appear to form trans-homodimers. Interacts with ITGB3; the interaction inhibits ITGAV:ITGB3 heterodimer formation.

The protein resides in the cell membrane. It localises to the cell junction. It is found in the tight junction. Its subcellular location is the cytoplasm. The protein localises to the cell projection. The protein resides in the cilium membrane. It localises to the nucleus. Functionally, transmembrane protein which can modulate activity of various signaling pathways, probably via binding to integrin ITGAV:ITGB3. Mediates heterophilic cell-cell interactions in vitro. Inhibits osteoclastogenesis downstream of TNFSF11/RANKL and CSF1, where it may function by attenuating signaling via integrin ITGB3 and MAP kinase p38. Plays a role in cartilage formation where it promotes proliferation and maturation of growth plate chondrocytes. Stimulates formation of primary cilia in chondrocytes. Enhances expression of genes involved in the hedgehog signaling pathway in chondrocytes, including the hedgehog signaling molecule IHH; may also promote signaling via the PTHLH/PTHrP pathway. Plays a role in angiogenesis where it suppresses migration of endothelial cells and also promotes their apoptosis. Inhibits VEGF-induced activation of AKT and p38 MAP kinase in endothelial cells. Also inhibits VTN (vitronectin)-mediated integrin ITGAV:ITGB3 signaling and activation of PTK2/FAK. May play a role in the maturation and maintenance of the blood-brain barrier. In Bos taurus (Bovine), this protein is Matrix remodeling-associated protein 8 (MXRA8).